The chain runs to 330 residues: MSSKRIIVTAGEPAGIGPDLVLALSAQDWPHQLVVCADKALLAQRATQLGIQVKLLDYQRDNPVQAQQAGTLLVEHIPLAEPVVAGQLNPANGHYVLKTLERAAKGCMNGEFDAIVTGPVHKGVINRAGVAFSGHTEFFAEQSKTPLVVMMLATEGLRTALVTTHLPLAEVPQAITCERLEQIVHILHKDLVEKFAIAEPKIYVCGLNPHAGEDGVLGMDEIETITPTLQRLREQYGMQLVGPLPADTIFSEKYLQQADAVLGMYHDQVLPVLKYKGFGRSVNITLGLPFIRTSVDHGTALDLAGTGQADAGSFWTALAYAIELVDKKAQ.

Substrate-binding residues include His135 and Thr136. A divalent metal cation is bound by residues His165, His210, and His266. Lys274, Asn283, and Arg292 together coordinate substrate.

The protein belongs to the PdxA family. Homodimer. The cofactor is Zn(2+). Requires Mg(2+) as cofactor. Co(2+) serves as cofactor.

It localises to the cytoplasm. It carries out the reaction 4-(phosphooxy)-L-threonine + NAD(+) = 3-amino-2-oxopropyl phosphate + CO2 + NADH. It participates in cofactor biosynthesis; pyridoxine 5'-phosphate biosynthesis; pyridoxine 5'-phosphate from D-erythrose 4-phosphate: step 4/5. Its function is as follows. Catalyzes the NAD(P)-dependent oxidation of 4-(phosphooxy)-L-threonine (HTP) into 2-amino-3-oxo-4-(phosphooxy)butyric acid which spontaneously decarboxylates to form 3-amino-2-oxopropyl phosphate (AHAP). This Vibrio cholerae serotype O1 (strain ATCC 39315 / El Tor Inaba N16961) protein is 4-hydroxythreonine-4-phosphate dehydrogenase.